The primary structure comprises 273 residues: Phosphate import ATP-binding protein PstB (273 aa).

In terms of domain architecture, ABC transporter spans 18–257 (ISLQNVTISY…EFDKTKKIFN (240 aa)). Residue 50–57 (GPSGCGKS) coordinates ATP.

Belongs to the ABC transporter superfamily. Phosphate importer (TC 3.A.1.7) family. In terms of assembly, the complex is composed of two ATP-binding proteins (PstB), two transmembrane proteins (PstC and PstA) and a solute-binding protein (PstS).

It localises to the cell inner membrane. The enzyme catalyses phosphate(out) + ATP + H2O = ADP + 2 phosphate(in) + H(+). Functionally, part of the ABC transporter complex PstSACB involved in phosphate import. Responsible for energy coupling to the transport system. In Prochlorococcus marinus (strain SARG / CCMP1375 / SS120), this protein is Phosphate import ATP-binding protein PstB.